The chain runs to 219 residues: Lipid transferase CIDEA (219 aa).

Positions 33 to 110 (PARPFRVSNH…ILEKGQKWMP (78 aa)) constitute a CIDE-N domain. Residues 163–180 (CTGLKGLLRSLLRFLSYS) form an amphipathic helix region.

It belongs to the CIDE family. Homodimer. Interacts with CIDEC. Directly interacts with CEBPB. Interacts with isoform CLSTN3beta of CLSTN3; inhibiting the lipid transferase activity of CIDEA. In terms of tissue distribution, expressed in omental and subcutaneous adipose tissue (at protein level).

The protein resides in the lipid droplet. It localises to the nucleus. The enzyme catalyses a triacyl-sn-glycerol(in) = a triacyl-sn-glycerol(out). Lipid transferase that promotes unilocular lipid droplet formation by mediating lipid droplet fusion. Lipid droplet fusion promotes their enlargement, restricting lipolysis and favoring lipid storage. Localizes on the lipid droplet surface, at focal contact sites between lipid droplets, and mediates atypical lipid droplet fusion by promoting directional net neutral lipid transfer from the smaller to larger lipid droplets. The transfer direction may be driven by the internal pressure difference between the contacting lipid droplet pair and occurs at a lower rate than that promoted by CIDEC. May also act as a CEBPB coactivator in epithelial cells to control the expression of a subset of CEBPB downstream target genes, including ID2, IGF1, PRLR, SOCS1, SOCS3, XDH, but not casein. By interacting with CEBPB, strengthens the association of CEBPB with the XDH promoter, increases histone acetylation and dissociates HDAC1 from the promoter. When overexpressed, induces apoptosis; the physiological significance of its role in apoptosis is unclear. The polypeptide is Lipid transferase CIDEA (Homo sapiens (Human)).